A 540-amino-acid chain; its full sequence is Membrane protein insertase YidC (540 aa).

The next 5 membrane-spanning stretches (helical) occupy residues 7–27 (LLVL…QMDY), 345–365 (IVSN…GILY), 415–435 (LGGC…YWTF), 453–473 (LSAQ…MFLL), and 494–514 (PLIF…YWLV).

The protein belongs to the OXA1/ALB3/YidC family. Type 1 subfamily. In terms of assembly, interacts with the Sec translocase complex via SecD. Specifically interacts with transmembrane segments of nascent integral membrane proteins during membrane integration.

It localises to the cell inner membrane. Required for the insertion and/or proper folding and/or complex formation of integral membrane proteins into the membrane. Involved in integration of membrane proteins that insert both dependently and independently of the Sec translocase complex, as well as at least some lipoproteins. Aids folding of multispanning membrane proteins. The chain is Membrane protein insertase YidC from Mannheimia succiniciproducens (strain KCTC 0769BP / MBEL55E).